The chain runs to 141 residues: Putative pre-16S rRNA nuclease (141 aa).

It belongs to the YqgF nuclease family.

It is found in the cytoplasm. Functionally, could be a nuclease involved in processing of the 5'-end of pre-16S rRNA. This is Putative pre-16S rRNA nuclease from Coxiella burnetii (strain CbuG_Q212) (Coxiella burnetii (strain Q212)).